The chain runs to 808 residues: ATP-dependent 6-phosphofructokinase (808 aa).

Residues 1 to 21 (MSSTQAPVEPPKRRRIGVLTS) are disordered. Residues 1 to 389 (MSSTQAPVEP…YHFAYRNTAT (389 aa)) form an N-terminal catalytic PFK domain 1 region. Residues Gly-23, 86–87 (RS), and 116–119 (GDGS) contribute to the ATP site. Asp-117 lines the Mg(2+) pocket. Substrate-binding positions include 162–164 (SID), Arg-199, 206–208 (MGR), Glu-263, Arg-291, and 297–300 (HTQR). Asp-164 serves as the catalytic Proton acceptor. The interdomain linker stretch occupies residues 390–403 (PDHPKMILPQDKRM). Positions 404–808 (RIAIIHVGAP…DIDPSALTSS (405 aa)) are C-terminal regulatory PFK domain 2. Residues Arg-480, 537–541 (TISNN), Arg-575, 582–584 (QGG), Glu-642, Arg-668, 674–677 (HFQQ), and Arg-749 contribute to the beta-D-fructose 2,6-bisphosphate site.

It belongs to the phosphofructokinase type A (PFKA) family. ATP-dependent PFK group I subfamily. Eukaryotic two domain clade 'E' sub-subfamily. As to quaternary structure, homotetramer. It depends on Mg(2+) as a cofactor.

The protein resides in the cytoplasm. The catalysed reaction is beta-D-fructose 6-phosphate + ATP = beta-D-fructose 1,6-bisphosphate + ADP + H(+). The protein operates within carbohydrate degradation; glycolysis; D-glyceraldehyde 3-phosphate and glycerone phosphate from D-glucose: step 3/4. With respect to regulation, allosterically activated by ADP, AMP, or fructose 2,6-bisphosphate, and allosterically inhibited by ATP or citrate. In terms of biological role, catalyzes the phosphorylation of D-fructose 6-phosphate to fructose 1,6-bisphosphate by ATP, the first committing step of glycolysis. The sequence is that of ATP-dependent 6-phosphofructokinase (pfkA) from Aspergillus fumigatus (strain ATCC MYA-4609 / CBS 101355 / FGSC A1100 / Af293) (Neosartorya fumigata).